Consider the following 111-residue polypeptide: Flagellar hook-basal body complex protein FliE (111 aa).

This sequence belongs to the FliE family.

The protein localises to the bacterial flagellum basal body. This Sinorhizobium fredii (strain NBRC 101917 / NGR234) protein is Flagellar hook-basal body complex protein FliE.